We begin with the raw amino-acid sequence, 313 residues long: Ribosomal RNA small subunit methyltransferase H (313 aa).

S-adenosyl-L-methionine is bound by residues G35–H37, D55, F80, D102, and Q109.

Belongs to the methyltransferase superfamily. RsmH family.

It is found in the cytoplasm. The enzyme catalyses cytidine(1402) in 16S rRNA + S-adenosyl-L-methionine = N(4)-methylcytidine(1402) in 16S rRNA + S-adenosyl-L-homocysteine + H(+). Specifically methylates the N4 position of cytidine in position 1402 (C1402) of 16S rRNA. This chain is Ribosomal RNA small subunit methyltransferase H, found in Shewanella putrefaciens (strain CN-32 / ATCC BAA-453).